The primary structure comprises 307 residues: UDP-N-acetylenolpyruvoylglucosamine reductase (307 aa).

In terms of domain architecture, FAD-binding PCMH-type spans 27-193 (RVGGPADVVF…LDAVFEGLAD (167 aa)). R172 is an active-site residue. S222 (proton donor) is an active-site residue. E299 is a catalytic residue.

The protein belongs to the MurB family. Requires FAD as cofactor.

Its subcellular location is the cytoplasm. It catalyses the reaction UDP-N-acetyl-alpha-D-muramate + NADP(+) = UDP-N-acetyl-3-O-(1-carboxyvinyl)-alpha-D-glucosamine + NADPH + H(+). It functions in the pathway cell wall biogenesis; peptidoglycan biosynthesis. Cell wall formation. The chain is UDP-N-acetylenolpyruvoylglucosamine reductase from Caulobacter sp. (strain K31).